The following is a 467-amino-acid chain: Protein PHOSPHATE STARVATION RESPONSE 3 (467 aa).

The tract at residues 227–266 (MSLPVSSCSDQEDLQDARSPAKVQLSSSRSSSGTASCNKP) is disordered. The 61-residue stretch at 262-322 (SCNKPRLRWT…HLQKYRLAKY (61 aa)) folds into the HTH myb-type domain. The segment at residues 293–318 (PKGVLKLMKVEGLTIYHIKSHLQKYR) is a DNA-binding region (H-T-H motif). A compositionally biased stretch (basic and acidic residues) spans 327–337 (KEDKKQEEKKT). Disordered stretches follow at residues 327–353 (KEDKKQEEKKTKSVANGNDHAKKKSAQ) and 400–467 (RESI…VHDE). A compositionally biased stretch (polar residues) spans 402-412 (SISSMTSTTEG). Composition is skewed to basic and acidic residues over residues 419-428 (PMEKTEDKAE) and 438-467 (RITDTDAECHSKVDNKKTKPQADLEMVHDE).

In terms of tissue distribution, expressed in the root cap and in the exodermis of the root, in the root tip of lateral roots, in the mesophyll cells of the leaf, in pollen, vascular cylinder of the anther and the veins of the lemma, palea and pistils, and in the xylem and phloem regions of large vascular bundles, small vascular bundles and diffuse vascular bundles in node I.

Its subcellular location is the nucleus. Functionally, transcription factor involved in phosphate starvation signaling. Binds to P1BS, an imperfect palindromic sequence 5'-GNATATNC-3', to promote the expression of inorganic phosphate (Pi) starvation-responsive genes. Functionally redundant with PHR1 and PHR2 in regulating Pi starvation response and Pi homeostasis. The protein is Protein PHOSPHATE STARVATION RESPONSE 3 of Oryza sativa subsp. japonica (Rice).